Here is a 496-residue protein sequence, read N- to C-terminus: DEAD-box ATP-dependent RNA helicase 38 (496 aa).

The disordered stretch occupies residues methionine 1 to serine 91. An N-acetylalanine modification is found at alanine 2. Residues lysine 7–serine 25 are compositionally biased toward low complexity. Residues glutamate 27–aspartate 40 are compositionally biased toward basic and acidic residues. The segment covering valine 41–valine 51 has biased composition (acidic residues). Positions lysine 78–serine 91 are enriched in polar residues. The Q motif motif lies at serine 91–alanine 120. Residues methionine 125–leucine 301 enclose the Helicase ATP-binding domain. Alanine 138–threonine 145 is an ATP binding site. The short motif at aspartate 245–aspartate 248 is the DEAD box element. The Helicase C-terminal domain maps to valine 329–glutamate 483.

Belongs to the DEAD box helicase family. DDX19/DBP5 subfamily. In terms of assembly, interacts with NUP214 (via N-terminus). In terms of tissue distribution, constitutively expressed.

Its subcellular location is the cytoplasm. It is found in the nucleus. It carries out the reaction ATP + H2O = ADP + phosphate + H(+). Its function is as follows. ATP-dependent RNA helicase essential for mRNA export from the nucleus. Plays an important role in the positive regulation of CBF/DREB transcription factors. This chain is DEAD-box ATP-dependent RNA helicase 38 (RH38), found in Arabidopsis thaliana (Mouse-ear cress).